Consider the following 166-residue polypeptide: Succinate dehydrogenase [ubiquinone] cytochrome b small subunit, mitochondrial (166 aa).

The Mitochondrial matrix portion of the chain corresponds to 1 to 65 (MASVARSSAL…VPPPSPSHGS (65 aa)). The chain crosses the membrane as a helical span at residues 66-87 (YHWTFDRVVAAGLIPLTVAPFA). Residues 88–94 (AGSLNPT) are Mitochondrial intermembrane-facing. A helical membrane pass occupies residues 95–115 (MDAVLAATILIHSHTGFGNII). His-106 lines the heme pocket. Topologically, residues 116-124 (VDYVPSKRV) are mitochondrial matrix. Tyr-118 contributes to the a ubiquinone binding site. Residues 125–149 (PKARKVFTWGLNAATVLVGLALYEF) traverse the membrane as a helical segment. Over 150 to 166 (ETTDVGLTETIKRVWKA) the chain is Mitochondrial intermembrane.

The protein belongs to the CybS family. Forms part of complex II containing four subunits: a flavoprotein (FP), an iron-sulfur protein (IP) and a cytochrome b composed of a large and a small subunit.

It is found in the mitochondrion inner membrane. It functions in the pathway carbohydrate metabolism; tricarboxylic acid cycle. Its function is as follows. Membrane-anchoring subunit of succinate dehydrogenase (SDH) that is involved in complex II of the mitochondrial electron transport chain and is responsible for transferring electrons from succinate to ubiquinone (coenzyme Q). The sequence is that of Succinate dehydrogenase [ubiquinone] cytochrome b small subunit, mitochondrial from Neurospora crassa (strain ATCC 24698 / 74-OR23-1A / CBS 708.71 / DSM 1257 / FGSC 987).